A 324-amino-acid chain; its full sequence is PTS system glucose-specific EIICBA component (324 aa).

The 63-residue stretch at 1–63 (HLLNVKIGMT…KWDLATPGRE (63 aa)) folds into the PTS EIIC type-1 domain. Helical transmembrane passes span 5 to 25 (VKIG…GVLP) and 28 to 48 (TAWW…YFGF). The 82-residue stretch at 78–159 (GDLPYEVLAA…QDIMQGKAPA (82 aa)) folds into the PTS EIIB type-1 domain. The Phosphocysteine intermediate; for EIIB activity role is filled by cysteine 100. The segment at 156–177 (KAPARAEEKPKTAASEAAESET) is disordered. Low complexity predominate over residues 167-177 (TAASEAAESET). Positions 194-298 (DQVFSQKMMG…SIVTPVIFTN (105 aa)) constitute a PTS EIIA type-1 domain. Histidine 246 acts as the Tele-phosphohistidine intermediate; for EIIA activity in catalysis.

The protein localises to the cell membrane. The enzyme catalyses N(pros)-phospho-L-histidyl-[protein] + D-glucose(out) = D-glucose 6-phosphate(in) + L-histidyl-[protein]. The phosphoenolpyruvate-dependent sugar phosphotransferase system (sugar PTS), a major carbohydrate active transport system, catalyzes the phosphorylation of incoming sugar substrates concomitantly with their translocation across the cell membrane. This system is involved in glucose transport. The protein is PTS system glucose-specific EIICBA component (ptsG) of Geobacillus stearothermophilus (Bacillus stearothermophilus).